The sequence spans 352 residues: Holliday junction branch migration complex subunit RuvB (352 aa).

The tract at residues 13–201 is large ATPase domain (RuvB-L); that stretch reads FSLRKKELRL…FGISQKIEFY (189 aa). Residues Arg41, Gly82, Lys85, Thr86, Thr87, 148–150, Arg191, Tyr201, and Arg238 each bind ATP; that span reads EDF. Position 86 (Thr86) interacts with Mg(2+). Residues 202–273 are small ATPAse domain (RuvB-S); that stretch reads TYDELKQIIV…LIKKALNSYQ (72 aa). The head domain (RuvB-H) stretch occupies residues 276–352; sequence EKGLDSLDRN…KYIDSKNENF (77 aa). Residues Arg330 and Arg335 each coordinate DNA.

It belongs to the RuvB family. In terms of assembly, homohexamer. Forms an RuvA(8)-RuvB(12)-Holliday junction (HJ) complex. HJ DNA is sandwiched between 2 RuvA tetramers; dsDNA enters through RuvA and exits via RuvB. An RuvB hexamer assembles on each DNA strand where it exits the tetramer. Each RuvB hexamer is contacted by two RuvA subunits (via domain III) on 2 adjacent RuvB subunits; this complex drives branch migration. In the full resolvosome a probable DNA-RuvA(4)-RuvB(12)-RuvC(2) complex forms which resolves the HJ.

Its subcellular location is the cytoplasm. The enzyme catalyses ATP + H2O = ADP + phosphate + H(+). The RuvA-RuvB-RuvC complex processes Holliday junction (HJ) DNA during genetic recombination and DNA repair, while the RuvA-RuvB complex plays an important role in the rescue of blocked DNA replication forks via replication fork reversal (RFR). RuvA specifically binds to HJ cruciform DNA, conferring on it an open structure. The RuvB hexamer acts as an ATP-dependent pump, pulling dsDNA into and through the RuvAB complex. RuvB forms 2 homohexamers on either side of HJ DNA bound by 1 or 2 RuvA tetramers; 4 subunits per hexamer contact DNA at a time. Coordinated motions by a converter formed by DNA-disengaged RuvB subunits stimulates ATP hydrolysis and nucleotide exchange. Immobilization of the converter enables RuvB to convert the ATP-contained energy into a lever motion, pulling 2 nucleotides of DNA out of the RuvA tetramer per ATP hydrolyzed, thus driving DNA branch migration. The RuvB motors rotate together with the DNA substrate, which together with the progressing nucleotide cycle form the mechanistic basis for DNA recombination by continuous HJ branch migration. Branch migration allows RuvC to scan DNA until it finds its consensus sequence, where it cleaves and resolves cruciform DNA. In Prochlorococcus marinus (strain MIT 9215), this protein is Holliday junction branch migration complex subunit RuvB.